The primary structure comprises 179 residues: Apolipophorin-3b (179 aa).

The first 16 residues, 1-16, serve as a signal peptide directing secretion; that stretch reads MNTLLAVLMLAVAAQA. 12 repeats span residues 30 to 40, 41 to 52, 53 to 60, 61 to 78, 79 to 89, 90 to 99, 100 to 113, 114 to 127, 128 to 140, 141 to 151, 152 to 165, and 166 to 179; these read VQQLNHTIVNA, AHELHETLGLPT, PDEALNLL, TEQA…TTSL, KQEAEKHQGSV, AEQLNRFARN, LNNS…SAQP, ADQL…LTNV, GHQW…RPSV, AQEAWAPVQSA, LQEA…AAAN, and LQNS…KPAN. N-linked (GlcNAc...) asparagine glycosylation occurs at N34. N101 carries an N-linked (GlcNAc...) asparagine glycan. Residues 152-179 are disordered; it reads LQEAAEKTKEAAANLQNSIQSAVQKPAN. A compositionally biased stretch (polar residues) spans 165–179; the sequence is NLQNSIQSAVQKPAN.

The protein belongs to the insect apolipophorin-3 family. As to quaternary structure, equilibrium between a soluble monomer and a bound lipoprotein form. Apolipophorin-3 associates with lipophorin during lipid loading until each particle contains 14 molecules of apolipophorin-3 in L.migratoria (5 molecules of apolipophorin-3a and 9 of apolipophorin-3b). As to expression, hemolymph.

Its subcellular location is the secreted. Functionally, assists in the loading of diacylglycerol, generated from triacylglycerol stores in the fat body through the action of adipokinetic hormone, into lipophorin, the hemolymph lipoprotein. It increases the lipid carrying capacity of lipophorin by covering the expanding hydrophobic surface resulting from diacylglycerol uptake. It thus plays a critical role in the transport of lipids during flight in several species of insects. The sequence is that of Apolipophorin-3b from Locusta migratoria (Migratory locust).